The primary structure comprises 1174 residues: MGVGLHLTVPGLRRDGRGVQSNSHDTSSKTTADISRCPQHTDAGLQRAATPGISRLLGISSRSVTLTKPRSATRGNSRYHWVPAAAGWTVGVIATLSLLASVSPLIRWIIKVPREFINDYLFNFPDTNFAWSFVLALLAAALTARKRIAWLVLLANMVLAAVVNAAEIAAGGNTAAESFGENLGFAVHVVAIVVLVLGYREFWAKVRRGALFRAAAVWLAGAVVGIVASWGLVELFPGSLAPDERLGYAANRVVGFALADPDLFTGRPHVFLNAIFGLFGAFALIGAAIVLFLSQRADNALTGEDESAIRGLLDLYGKDDSLGYFATRRDKSVVFASSGRACITYRVEVGVCLASGDPVGDHRAWPQAVDAWLRLCQTYGWAPGVMGASSQGAQTYREAGLTALELGDEAILRPADFKLSGPEMRGVRQAVTRARRAGLTVRIRRHRDIAEDEMAQTITRADSWRDTETERGFSMALGRLGDPADSDCLLVEAIDPHNQVLAMLSLVPWGTTGVSLDLMRRSPQSPNGTIELMVSELALHAESLGITRISLNFAVFRAAFEQGAQLGAGPVARLWRGLLVFFSRWWQLETLYRSNMKYQPEWVPRYACYEDARVIPRVGVASVIAEGFLVLPFSRRNRVHTGHHPAVPERLAATGLLHHDGSAPDVSGLRQVGLTNGDGVERRLPEQVRVRFDKLEKLRSSGIDAFPVGRPPSHTVAQALAADHQASVSVSGRIMRIRNYGGVLFAQLRDWSGEMQVLLDNSRLDQGCAADFNAATDLGDLVEMTGHMGASKTGTPSLIVSGWRLIGKCLRPLPNKWKGLLDPEARVRTRYLDLAVNAESRALITARSSVLRAVRETLFAKGFVEVETPILQQLHGGATARPFVTHINTYSMDLFLRIAPELYLKRLCVGGVERVFELGRAFRNEGVDFSHNPEFTLLEAYQAHADYLEWIDGCRELIQNAAQAANGAPIAMRPRTDKGSDGTRHHLEPVDISGIWPVRTVHDAISEALGERIDADTGLTTLRKLCDAAGVPYRTQWDAGAVVLELYEHLVECRTEQPTFYIDFPTSVSPLTRPHRSKRGVAERWDLVAWGIELGTAYSELTDPVEQRRRLQEQSLLAAGGDPEAMELDEDFLQAMEYAMPPTGGLGMGIDRVVMLITGRSIRETLPFPLAKPH.

The tract at residues 1–665 is phosphatidylglycerol lysyltransferase; it reads MGVGLHLTVP…LLHHDGSAPD (665 aa). The segment at 9–36 is disordered; that stretch reads VPGLRRDGRGVQSNSHDTSSKTTADISR. The segment covering 19–33 has biased composition (polar residues); sequence VQSNSHDTSSKTTAD. Helical transmembrane passes span 82 to 102, 124 to 144, 148 to 168, 179 to 199, 216 to 236, 274 to 294, and 614 to 634; these read VPAA…LASV, FPDT…ALTA, IAWL…AAEI, FGEN…VLGY, AVWL…VELF, AIFG…LFLS, and VIPR…LPFS. Positions 666-1174 are lysine--tRNA ligase; that stretch reads VSGLRQVGLT…TLPFPLAKPH (509 aa). Positions 728–806 form a DNA-binding region, OB; that stretch reads VSVSGRIMRI…SLIVSGWRLI (79 aa). Asp1086 and Glu1093 together coordinate Mg(2+).

In the N-terminal section; belongs to the LPG synthetase family. It in the C-terminal section; belongs to the class-II aminoacyl-tRNA synthetase family. Requires Mg(2+) as cofactor.

It is found in the cell membrane. It catalyses the reaction tRNA(Lys) + L-lysine + ATP = L-lysyl-tRNA(Lys) + AMP + diphosphate. The enzyme catalyses L-lysyl-tRNA(Lys) + a 1,2-diacyl-sn-glycero-3-phospho-(1'-sn-glycerol) = a 1,2-diacyl-sn-glycero-3-phospho-1'-(3'-O-L-lysyl)-sn-glycerol + tRNA(Lys). Its function is as follows. Catalyzes the production of L-lysyl-tRNA(Lys)transfer and the transfer of a lysyl group from L-lysyl-tRNA(Lys) to membrane-bound phosphatidylglycerol (PG), which produces lysylphosphatidylglycerol (LPG), one of the components of the bacterial membrane with a positive net charge. LPG synthesis contributes to the resistance to cationic antimicrobial peptides (CAMPs) and likely protects M.tuberculosis against the CAMPs produced by competiting microorganisms (bacteriocins). In fact, the modification of anionic phosphatidylglycerol with positively charged L-lysine results in repulsion of the peptides. This chain is Lysylphosphatidylglycerol biosynthesis bifunctional protein LysX (lysX), found in Mycobacterium tuberculosis (strain KZN 1435 / MDR).